A 226-amino-acid chain; its full sequence is Spermatogenesis-associated protein 25 (226 aa).

A helical transmembrane segment spans residues 153–173 (ICILTLAMMIAGIPTVPVPGL).

Belongs to the SPATA25 family. In terms of tissue distribution, expressed strongly in testis, weakly in epididymis and not detected in other tissues.

The protein localises to the membrane. May play a role in spermatogenesis. The chain is Spermatogenesis-associated protein 25 (Spata25) from Mus musculus (Mouse).